An 815-amino-acid chain; its full sequence is cGMP-specific 3',5'-cyclic phosphodiesterase delta (815 aa).

The Cytoplasmic segment spans residues 1–56 (MNEYNNDNMEQEKEKKKEEQKYKNIIKKEYFIFPRLYDKNKEIEYNKLRIHNIKEY). The chain crosses the membrane as a helical span at residues 57–77 (ICIHLTISLFIILIECFVFSF). At 78–86 (NLNIKDTTY) the chain is on the extracellular side. The chain crosses the membrane as a helical span at residues 87 to 107 (VEICVVIFSILNCLMHIVVLI). Over 108 to 120 (KMYFFTSESVYTK) the chain is Cytoplasmic. Residues 121-141 (GVFIGYIVLNQVFQFLSLYFF) form a helical membrane-spanning segment. Topologically, residues 142–160 (TKRNEQSKNDIAHLKYYDN) are extracellular. Residues 161–181 (SFNLYVHFFVDSVFILCLPAL) traverse the membrane as a helical segment. Over 182–183 (SF) the chain is Cytoplasmic. The chain crosses the membrane as a helical span at residues 184-204 (FLSVLFMMMFLCLNILLINMI). Topologically, residues 205–210 (KFNKTN) are extracellular. N-linked (GlcNAc...) asparagine glycosylation occurs at N207. Residues 211–231 (YGSDIYHICLLSVVLLMFLIL) form a helical membrane-spanning segment. Topologically, residues 232–815 (RYMMEERNRL…FKEEIKHGKL (584 aa)) are cytoplasmic. The region spanning 384-762 (YEVEVLKNIK…QTWRLIEKNI (379 aa)) is the PDEase domain. H459 acts as the Proton donor in catalysis. 459 to 463 (HNANH) provides a ligand contact to 3',5'-cyclic GMP. H463, H499, D500, and D616 together coordinate a divalent metal cation. 3',5'-cyclic GMP is bound by residues D500, D616, and Q715.

The protein belongs to the cyclic nucleotide phosphodiesterase family. The cofactor is a divalent metal cation.

The protein localises to the membrane. The enzyme catalyses 3',5'-cyclic GMP + H2O = GMP + H(+). Its pathway is purine metabolism; 3',5'-cyclic GMP degradation; GMP from 3',5'-cyclic GMP: step 1/1. In terms of biological role, specifically hydrolyzes the second messenger cGMP, which is a key regulator of many important physiological processes. Probably by regulating cGMP levels, required for activation of gametogenesis. The polypeptide is cGMP-specific 3',5'-cyclic phosphodiesterase delta (Plasmodium falciparum (isolate 3D7)).